Reading from the N-terminus, the 932-residue chain is Protein translocase subunit SecA (932 aa).

ATP is bound by residues Gln87, 105–109, and Asp515; that span reads GEGKT. Positions 916, 918, 927, and 928 each coordinate Zn(2+).

The protein belongs to the SecA family. Monomer and homodimer. Part of the essential Sec protein translocation apparatus which comprises SecA, SecYEG and auxiliary proteins SecDF-YajC and YidC. Requires Zn(2+) as cofactor.

The protein localises to the cell inner membrane. The protein resides in the cytoplasm. The enzyme catalyses ATP + H2O + cellular proteinSide 1 = ADP + phosphate + cellular proteinSide 2.. Functionally, part of the Sec protein translocase complex. Interacts with the SecYEG preprotein conducting channel. Has a central role in coupling the hydrolysis of ATP to the transfer of proteins into and across the cell membrane, serving both as a receptor for the preprotein-SecB complex and as an ATP-driven molecular motor driving the stepwise translocation of polypeptide chains across the membrane. This Burkholderia multivorans (strain ATCC 17616 / 249) protein is Protein translocase subunit SecA.